The primary structure comprises 486 residues: dTDP-4-dehydro-6-deoxy-alpha-D-glucopyranose 2,3-dehydratase (486 aa).

DTDP-4-dehydro-6-deoxy-alpha-D-glucose-binding positions include Trp66, 149–153 (TRSNY), Ser187, Trp304, Arg367, 383–385 (QCS), 388–389 (NY), and 421–424 (EGGR).

It belongs to the hexose 2,3-dehydratase family. As to quaternary structure, homodimer.

The catalysed reaction is dTDP-4-dehydro-6-deoxy-alpha-D-glucose = dTDP-3,4-didehydro-2,6-dideoxy-alpha-D-glucose + H2O. Involved in the biosynthesis of forosamine ((4-dimethylamino)-2,3,4,6-tetradeoxy-alpha-D-threo-hexopyranose), a highly deoxygenated sugar component of several bioactive natural products such as the insecticidal spinosyns A and D. Catalyzes the removal of the hydroxyl group at position C-2 of the hexose ring of dTDP-4-dehydro-6-deoxy-alpha-D-glucopyranose, and the oxidation of the hydroxyl group at position C-3 to form a carbonyl functionality. The product of the reaction, dTDP-2,6-dideoxy-D-glycero-hex-2-enos-4-ulose, is a highly unstable diketosugar, which spontaneously forms dTDP-3,4-didehydro-2,6-dideoxy-alpha-D-glucose. In Saccharopolyspora spinosa, this protein is dTDP-4-dehydro-6-deoxy-alpha-D-glucopyranose 2,3-dehydratase.